A 256-amino-acid polypeptide reads, in one-letter code: Reaction center protein M chain (256 aa).

Transmembrane regions (helical) follow at residues 52 to 78 (PGVA…LASV), 110 to 139 (EGGW…ARAL), and 142 to 167 (GTHM…PLLL). (7R,8Z)-bacteriochlorophyll b contacts are provided by histidine 181 and histidine 201. The helical transmembrane segment at 197–225 (YNPFHMLSIAFLYGSAVLFAMHGATILAV) threads the bilayer. Fe cation contacts are provided by histidine 218 and glutamate 233. Residue tryptophan 251 coordinates a ubiquinone.

The protein belongs to the reaction center PufL/M/PsbA/D family. As to quaternary structure, reaction center is composed of four bacteriochlorophylls, two bacteriopheophytins, two ubiquinones, one iron, and two highly hydrophobic polypeptide chains (designated L and M).

The protein resides in the cellular chromatophore membrane. Its function is as follows. The reaction center is a membrane-bound complex that mediates the initial photochemical event in the electron transfer process of photosynthesis. The sequence is that of Reaction center protein M chain (pufM) from Pararhodospirillum photometricum (Rhodospirillum photometricum).